Here is a 521-residue protein sequence, read N- to C-terminus: Signal recognition particle protein (521 aa).

Residues 107–114 (GLQGSGKT), 196–200 (DTAGR), and 254–257 (TKLD) each bind GTP. The disordered stretch occupies residues 436–505 (GGMGIPGMGR…MPDGLNELPP (70 aa)). Over residues 447-462 (SATRKSKGGKGKKRAR) the composition is skewed to basic residues.

The protein belongs to the GTP-binding SRP family. SRP54 subfamily. As to quaternary structure, part of the signal recognition particle protein translocation system, which is composed of SRP and FtsY.

It localises to the cytoplasm. The catalysed reaction is GTP + H2O = GDP + phosphate + H(+). Functionally, involved in targeting and insertion of nascent membrane proteins into the cytoplasmic membrane. Binds to the hydrophobic signal sequence of the ribosome-nascent chain (RNC) as it emerges from the ribosomes. The SRP-RNC complex is then targeted to the cytoplasmic membrane where it interacts with the SRP receptor FtsY. This Mycobacterium leprae (strain TN) protein is Signal recognition particle protein.